We begin with the raw amino-acid sequence, 346 residues long: MLNETPALAPDGQPYRLLTLRNNAGMVVTLMDWGATLLSARIPLSDGSVREALLGCASPECYQDQAAFLGASIGRYANRIANSRYTFDGETVTLSPSQGVNQLHGGPEGFDKRRWQIVNQNDRQVLFALSSDDGDQGFPGNLGATVQYRLTDDNRISITYRATVDKPCPVNMTNHVYFNLDGEQSDVRNHKLQILADEYLPVDEGGIPHDGLKSVAGTSFDFRSAKIIASEFLADDDQRKVKGYDHAFLLQAKGDGKKVAAHVWSADEKLQLKVYTTAPALQFYSGNFLGGTPSRGTEPYADWQGLALESEFLPDSPNHPEWPQPDCFLRPGEEYSSLTEYQFIAE.

Residue Arg-79 participates in substrate binding. His-175 (proton donor) is an active-site residue. Asp-245 provides a ligand contact to substrate. Glu-309 acts as the Proton acceptor in catalysis.

This sequence belongs to the aldose epimerase family.

It localises to the cytoplasm. It carries out the reaction alpha-D-glucose = beta-D-glucose. It functions in the pathway carbohydrate metabolism; hexose metabolism. Mutarotase converts alpha-aldose to the beta-anomer. It is active on D-glucose, L-arabinose, D-xylose, D-galactose, maltose and lactose. This is Aldose 1-epimerase (galM) from Escherichia coli (strain K12).